Reading from the N-terminus, the 578-residue chain is Proline--tRNA ligase (578 aa).

Belongs to the class-II aminoacyl-tRNA synthetase family. ProS type 1 subfamily. In terms of assembly, homodimer.

Its subcellular location is the cytoplasm. The catalysed reaction is tRNA(Pro) + L-proline + ATP = L-prolyl-tRNA(Pro) + AMP + diphosphate. Functionally, catalyzes the attachment of proline to tRNA(Pro) in a two-step reaction: proline is first activated by ATP to form Pro-AMP and then transferred to the acceptor end of tRNA(Pro). As ProRS can inadvertently accommodate and process non-cognate amino acids such as alanine and cysteine, to avoid such errors it has two additional distinct editing activities against alanine. One activity is designated as 'pretransfer' editing and involves the tRNA(Pro)-independent hydrolysis of activated Ala-AMP. The other activity is designated 'posttransfer' editing and involves deacylation of mischarged Ala-tRNA(Pro). The misacylated Cys-tRNA(Pro) is not edited by ProRS. The chain is Proline--tRNA ligase from Paraburkholderia xenovorans (strain LB400).